We begin with the raw amino-acid sequence, 493 residues long: Transmembrane and coiled-coil domain-containing protein 6 (493 aa).

A coiled-coil region spans residues 15–84 (GVEELRRRRR…QRGTEEKERE (70 aa)). A run of 2 helical transmembrane segments spans residues 338-358 (VVAALFILLQFFFQKQPSLLP) and 386-406 (PLLQLLPVSNVVSVMVLTVLC).

The protein localises to the membrane. The sequence is that of Transmembrane and coiled-coil domain-containing protein 6 (TMCO6) from Homo sapiens (Human).